Reading from the N-terminus, the 537-residue chain is Methylmalonate-semialdehyde/malonate-semialdehyde dehydrogenase [acylating], mitochondrial (537 aa).

Residues 1–34 (MAAVAVAAAAAALRARILQVSSKVNSSWQPASSF) constitute a mitochondrion transit peptide. N6-acetyllysine; alternate occurs at positions 49, 54, 57, and 78. Lys-49, Lys-54, Lys-57, and Lys-78 each carry N6-succinyllysine; alternate. The residue at position 89 (Lys-89) is an N6-acetyllysine. An N6-acetyllysine; alternate mark is found at Lys-119 and Lys-131. An N6-succinyllysine; alternate mark is found at Lys-119 and Lys-131. NAD(+) contacts are provided by Ala-185, Phe-187, Lys-211, Glu-214, Arg-215, and Ser-264. Ser-264 bears the Phosphoserine mark. An N6-acetyllysine modification is found at Lys-300. The active-site Nucleophile is the Cys-319. N6-acetyllysine occurs at positions 332 and 333. Lys-366 and Lys-378 each carry N6-acetyllysine; alternate. 2 positions are modified to N6-succinyllysine; alternate: Lys-366 and Lys-378. Phosphoserine is present on Ser-382. Lys-393 bears the N6-succinyllysine mark. Residue Glu-419 coordinates NAD(+). Position 502 is an N6-acetyllysine (Lys-502). Residue Lys-519 is modified to N6-succinyllysine.

The protein belongs to the aldehyde dehydrogenase family. As to quaternary structure, homodimer. Post-translationally, the N-terminus is blocked.

The protein resides in the mitochondrion. It carries out the reaction 2-methyl-3-oxopropanoate + NAD(+) + CoA + H2O = propanoyl-CoA + hydrogencarbonate + NADH + H(+). It catalyses the reaction 3-oxopropanoate + NAD(+) + CoA + H2O = hydrogencarbonate + acetyl-CoA + NADH + H(+). The enzyme catalyses (R)-2-methyl-3-oxopropanoate + NAD(+) + CoA + H2O = propanoyl-CoA + hydrogencarbonate + NADH + H(+). The catalysed reaction is (S)-2-methyl-3-oxopropanoate + NAD(+) + CoA + H2O = propanoyl-CoA + hydrogencarbonate + NADH + H(+). In terms of biological role, malonate and methylmalonate semialdehyde dehydrogenase involved in the catabolism of valine, thymine, and compounds catabolized by way of beta-alanine, including uracil and cytidine. This chain is Methylmalonate-semialdehyde/malonate-semialdehyde dehydrogenase [acylating], mitochondrial (ALDH6A1), found in Bos taurus (Bovine).